Here is a 208-residue protein sequence, read N- to C-terminus: Granulocyte colony-stimulating factor (208 aa).

An N-terminal signal peptide occupies residues 1–30; it reads MAQLSAQRRMKLMALQLLLWQSALWSGREA. 2 disulfide bridges follow: Cys72–Cys78 and Cys100–Cys110. The O-linked (GalNAc...) threonine glycan is linked to Thr169.

It belongs to the IL-6 superfamily. Monomer. Post-translationally, O-glycosylated.

The protein resides in the secreted. In terms of biological role, granulocyte/macrophage colony-stimulating factors are cytokines that act in hematopoiesis by controlling the production, differentiation, and function of 2 related white cell populations of the blood, the granulocytes and the monocytes-macrophages. This CSF induces granulocytes. In Mus musculus (Mouse), this protein is Granulocyte colony-stimulating factor (Csf3).